The primary structure comprises 413 residues: Monacolin J acid methylbutanoyltransferase (413 aa).

Arg73 serves as a coordination point for monacolin J. The Acyl-ester intermediate role is filled by Ser76. Residues Arg173, Tyr188, and Tyr258 each coordinate monacolin J. Position 366 (Gly366) interacts with 2-methylbutanoate. Positions 388 and 390 each coordinate monacolin J.

Belongs to the class-A beta-lactamase family. In terms of assembly, interacts with LovF.

It carries out the reaction monacolin J carboxylate + (S)-2-methylbutanoyl-[2-methylbutanoate polyketide synthase] = lovastatin carboxylate + holo-[2-methylbutanoate polyketide synthase]. The protein operates within polyketide biosynthesis; lovastatin biosynthesis. In terms of biological role, monacolin J acid methylbutanoyltransferase; part of the gene cluster that mediates the biosynthesis of lovastatin (also known as mevinolin, mevacor or monacolin K), a hypolipidemic inhibitor of (3S)-hydroxymethylglutaryl-coenzyme A (HMG-CoA) reductase (HMGR). The first step in the biosynthesis of lovastatin is the production of dihydromonacolin L acid by the lovastatin nonaketide synthase lovB and the trans-acting enoyl reductase lovC via condensation of one acetyl-CoA unit and 8 malonyl-CoA units. Dihydromonacolin L acid is released from lovB by the thioesterase lovG. Next, dihydromonacolin L acid is oxidized by the dihydromonacolin L monooxygenase lovA twice to form monacolin J acid. The 2-methylbutyrate moiety of lovastatin is synthesized by the lovastatin diketide synthase lovF via condensation of one acetyl-CoA unit and one malonyl-CoA unit. Finally, the covalent attachment of this moiety to monacolin J acid is catalyzed by the transesterase lovD to yield lovastatin. LovD has broad substrate specificity and can also convert monacolin J to simvastatin using alpha-dimethylbutanoyl-S-methyl-3-mercaptopropionate (DMB-S-MMP) as the thioester acyl donor, and can also catalyze the reverse reaction and function as hydrolase in vitro. LovD has much higher activity with LovF-bound 2-methylbutanoate than with free diketide substrates. This Aspergillus terreus protein is Monacolin J acid methylbutanoyltransferase.